Reading from the N-terminus, the 159-residue chain is Phosphopantetheine adenylyltransferase (159 aa).

Residue threonine 9 participates in substrate binding. ATP contacts are provided by residues 9–10 (TF) and histidine 17. The substrate site is built by lysine 41, leucine 73, and arginine 87. ATP contacts are provided by residues 88-90 (GLR), glutamate 98, and 123-129 (YMFISAT).

This sequence belongs to the bacterial CoaD family. In terms of assembly, homohexamer. It depends on Mg(2+) as a cofactor.

Its subcellular location is the cytoplasm. The enzyme catalyses (R)-4'-phosphopantetheine + ATP + H(+) = 3'-dephospho-CoA + diphosphate. It functions in the pathway cofactor biosynthesis; coenzyme A biosynthesis; CoA from (R)-pantothenate: step 4/5. Reversibly transfers an adenylyl group from ATP to 4'-phosphopantetheine, yielding dephospho-CoA (dPCoA) and pyrophosphate. The sequence is that of Phosphopantetheine adenylyltransferase from Nitrosomonas europaea (strain ATCC 19718 / CIP 103999 / KCTC 2705 / NBRC 14298).